A 65-amino-acid polypeptide reads, in one-letter code: Large ribosomal subunit protein bL35 (65 aa).

The segment at 1 to 26 (MPKMKTNKSAQKRFKKTGSGRFKCKQ) is disordered. The span at 10–26 (AQKRFKKTGSGRFKCKQ) shows a compositional bias: basic residues.

This sequence belongs to the bacterial ribosomal protein bL35 family.

This chain is Large ribosomal subunit protein bL35, found in Hydrogenovibrio crunogenus (strain DSM 25203 / XCL-2) (Thiomicrospira crunogena).